We begin with the raw amino-acid sequence, 271 residues long: uncharacterized protein (271 aa).

This is an uncharacterized protein from Human cytomegalovirus (strain Merlin) (HHV-5).